Reading from the N-terminus, the 769-residue chain is Apoptotic enhancer 1 protein (769 aa).

Disordered stretches follow at residues 69–88 (PVRVVAQPPPPHPQALSQQY), 265–396 (SVEP…LDES), and 451–518 (PQLP…RSDD). A compositionally biased stretch (low complexity) spans 275–284 (QQQQPSPQMM). The span at 285-295 (KSEEFSEKRDL) shows a compositional bias: basic and acidic residues. Low complexity predominate over residues 339–353 (STDPHSNHSSPSTSS). 3 stretches are compositionally biased toward polar residues: residues 354–378 (QKAPTLITFSPPSFEQKINSSTMTR), 453–467 (LPTSQEEPSAITSET), and 474–491 (NSESKQVATSSDSTNNLE). ANK repeat units lie at residues 585–617 (EGITALHNAICAGHYEIVRFLIENDADVNAQDS) and 618–652 (DGWTPLHCAASCNNLPMVRQLVEGGGCVLASTLSD). An SH3 domain is found at 684–746 (INTGKVYAAY…PRTYLALYPS (63 aa)).

The protein belongs to the iASPP family. In terms of assembly, interacts with cep-1/p53; the interaction inhibits pro-apoptotic activity of cep-1.

It localises to the nucleus. Its function is as follows. Negetively regulates apoptosis via its interaction with cep-1. This chain is Apoptotic enhancer 1 protein, found in Caenorhabditis elegans.